The chain runs to 506 residues: Protein spinster homolog 1 (506 aa).

The tract at residues 1-42 (MSQADADITPFFADDNEGEGPVENGVGSPLPEDEEEESPSGV) is disordered. A compositionally biased stretch (low complexity) spans 21–30 (PVENGVGSPL). The next 12 helical transmembrane spans lie at 52 to 71 (IVLCYINLLNYMDRFTVAGV), 87 to 107 (GLLQTVFICSYMFLAPLFGYL), 115 to 135 (LIMCVGIFFWSVVTLASSFIG), 149 to 169 (VGVGEASYSTIAPTIIADLFV), 176 to 196 (MLSIFYFAIPVGSGMGYIVGS), 207 to 227 (WALRVTPGLGLLAVFLLMLVV), 266 to 286 (FGFTAVAFVTGSLALWAPAFL), 310 to 330 (LIFGAITVVTGILGVASGVQA), 344 to 364 (LVCAAGLLLAAPFLYLSIMFA), 373 to 393 (VFIFLGETFLSMNWAIVADIL), 408 to 428 (FQIVLSHLLGDAISPYLIGVV), and 450 to 470 (LLCSFVAVAGGAFFLATAVFI).

Belongs to the major facilitator superfamily. Spinster (TC 2.A.1.49) family. In terms of tissue distribution, expressed in yolk cells.

The protein resides in the lysosome membrane. The catalysed reaction is a 1-acyl-sn-glycero-3-phosphocholine(out) + H(+)(out) = a 1-acyl-sn-glycero-3-phosphocholine(in) + H(+)(in). It carries out the reaction a 1-acyl-sn-glycero-3-phosphoethanolamine(out) + H(+)(out) = a 1-acyl-sn-glycero-3-phosphoethanolamine(in) + H(+)(in). The enzyme catalyses a 1-O-(1Z-alkenyl)-sn-glycero-3-phosphocholine(out) + H(+)(out) = a 1-O-(1Z-alkenyl)-sn-glycero-3-phosphocholine(in) + H(+)(in). It catalyses the reaction a 1-O-(1Z-alkenyl)-sn-glycero-3-phosphoethanolamine(out) + H(+)(out) = a 1-O-(1Z-alkenyl)-sn-glycero-3-phosphoethanolamine(in) + H(+)(in). Functionally, mediates the rate-limiting, proton-dependent, lysosomal efflux of lysophospholipids. Selective for zwitterionic headgroups such as lysophosphatidylcholine (LPC) and lysophosphatidylethanolamine (LPE). Essential player in lysosomal homeostasis. Critical for embryogenesis. Involved in the regulation of developmental senescence. This chain is Protein spinster homolog 1 (spns1), found in Danio rerio (Zebrafish).